The following is a 248-amino-acid chain: DNA/RNA-binding protein ALBA1 (248 aa).

Positions 217 to 248 are disordered; the sequence is GRDGGYRGGNRGGSRSGFRGGRGGFRGGRALS. A compositionally biased stretch (gly residues) spans 222–248; the sequence is YRGGNRGGSRSGFRGGRGGFRGGRALS.

The protein belongs to the histone-like Alba family. As to quaternary structure, may form homodimers. Identified in a TARE6-associated complex consisting of over 30 proteins and including ALBA1, ALBA2 and ALBA4; the complex binds to the non-coding subtelomeric repeat region TARE6.

The protein localises to the nucleus. It is found in the chromosome. The protein resides in the telomere. Its subcellular location is the cytoplasm. In terms of biological role, possesses DNA- and RNA-binding activities. During the asexual blood stages binds to a sub-population of mature mRNAs and regulates the timing of their translation. Binds to DNA with relaxed sequence specificity. Associates with the subtelomeric TARE6 repeats. This Plasmodium falciparum (isolate 3D7) protein is DNA/RNA-binding protein ALBA1.